The primary structure comprises 457 residues: Glutamate--tRNA ligase 1 (457 aa).

The 'HIGH' region motif lies at 9–19 (PSPTGYIHIGN). The 'KMSKS' region motif lies at 250-254 (GLSKR). Residue Lys253 participates in ATP binding.

The protein belongs to the class-I aminoacyl-tRNA synthetase family. Glutamate--tRNA ligase type 1 subfamily. As to quaternary structure, monomer.

It is found in the cytoplasm. It carries out the reaction tRNA(Glu) + L-glutamate + ATP = L-glutamyl-tRNA(Glu) + AMP + diphosphate. Functionally, catalyzes the attachment of glutamate to tRNA(Glu) in a two-step reaction: glutamate is first activated by ATP to form Glu-AMP and then transferred to the acceptor end of tRNA(Glu). The chain is Glutamate--tRNA ligase 1 from Brucella canis (strain ATCC 23365 / NCTC 10854 / RM-666).